Consider the following 361-residue polypeptide: Probable mannose-1-phosphate guanylyltransferase 1 (361 aa).

GDP-alpha-D-mannose is bound by residues Leu-6 and Val-7. Diphosphate is bound by residues Gly-9, Gly-11, Thr-12, Arg-13, and Lys-23. 5 residues coordinate GDP-alpha-D-mannose: Gly-85, Asn-109, Asp-111, Gly-146, and Asn-173.

It belongs to the transferase hexapeptide repeat family.

It catalyses the reaction alpha-D-mannose 1-phosphate + GTP + H(+) = GDP-alpha-D-mannose + diphosphate. It participates in nucleotide-sugar biosynthesis; GDP-alpha-D-mannose biosynthesis; GDP-alpha-D-mannose from alpha-D-mannose 1-phosphate (GTP route): step 1/1. Its function is as follows. Catalyzes a reaction of the Smirnoff-Wheeler pathway, the major route to ascorbate biosynthesis in plants. In Oryza sativa subsp. japonica (Rice), this protein is Probable mannose-1-phosphate guanylyltransferase 1.